A 461-amino-acid chain; its full sequence is MSQGKVVQIIGAVVDIEFPQDSVPKIYDALRITEGDLQGLTLEVQQQLGGGVVRTIALGTTDGLRRGLTVDNTGEAIQVPVGKATLGRIMDVLGNPIDEAGPIGEEERMSIHREAPTYEDQSSSIELLETGIKVIDLVCPFAKGGKVGLFGGAGVGKTVNMMELIRNIAIEHSGYSVFAGVGERTREGNDFYHEMNESNVLDKVSLVYGQMNEPPGNRLRVALTGLTMAEKFRDEGRDVLFFVDNIYRYTLAGTEVSALLGRMPSAVGYQPTLAEEMGVLQERIASTKTGSITSIQAVYVPADDLTDPSPATTFAHLDATVVLSRDIASLGIYPAVDPLDSTSRQLDPLVIGQEHYDTARGVQSVLQRYKELKDIIAILGMDELSEEDKLSVSRARKIQRFLSQPFFVAEVFTGSPGKYVSLKDTISGFKGILEGEFDDLPEQAFYMVGSIEEASEKAKKM.

151–158 lines the ATP pocket; that stretch reads GGAGVGKT.

This sequence belongs to the ATPase alpha/beta chains family. F-type ATPases have 2 components, CF(1) - the catalytic core - and CF(0) - the membrane proton channel. CF(1) has five subunits: alpha(3), beta(3), gamma(1), delta(1), epsilon(1). CF(0) has three main subunits: a(1), b(2) and c(9-12). The alpha and beta chains form an alternating ring which encloses part of the gamma chain. CF(1) is attached to CF(0) by a central stalk formed by the gamma and epsilon chains, while a peripheral stalk is formed by the delta and b chains.

It localises to the cell inner membrane. It catalyses the reaction ATP + H2O + 4 H(+)(in) = ADP + phosphate + 5 H(+)(out). In terms of biological role, produces ATP from ADP in the presence of a proton gradient across the membrane. The catalytic sites are hosted primarily by the beta subunits. This chain is ATP synthase subunit beta 2, found in Pseudoalteromonas atlantica (strain T6c / ATCC BAA-1087).